Reading from the N-terminus, the 228-residue chain is Lipoprotein-releasing system ATP-binding protein LolD (228 aa).

Positions 5–228 (FALSAISKSF…SGTLQNYTDY (224 aa)) constitute an ABC transporter domain. 40–47 (GPSGSGKS) provides a ligand contact to ATP.

Belongs to the ABC transporter superfamily. Lipoprotein translocase (TC 3.A.1.125) family. As to quaternary structure, the complex is composed of two ATP-binding proteins (LolD) and two transmembrane proteins (LolC and LolE).

Its subcellular location is the cell inner membrane. Its function is as follows. Part of the ABC transporter complex LolCDE involved in the translocation of mature outer membrane-directed lipoproteins, from the inner membrane to the periplasmic chaperone, LolA. Responsible for the formation of the LolA-lipoprotein complex in an ATP-dependent manner. The polypeptide is Lipoprotein-releasing system ATP-binding protein LolD (Ehrlichia ruminantium (strain Gardel)).